Here is a 279-residue protein sequence, read N- to C-terminus: Protein SCO2 homolog, mitochondrial (279 aa).

Residues 73–90 form a helical membrane-spanning segment; that stretch reads LVVTLLFGGGIIGTWWYV. Residues 91–279 lie on the Mitochondrial intermembrane side of the membrane; it reads HQEKEKRIQM…MKTFVRLFPD (189 aa). Positions 97–271 constitute a Thioredoxin domain; the sequence is RIQMQRLEQL…IAESIRNHMK (175 aa). Positions 145, 149, and 236 each coordinate Cu cation. A disulfide bond links C145 and C149.

The protein belongs to the SCO1/2 family. As to quaternary structure, homodimer.

It is found in the mitochondrion inner membrane. Its function is as follows. Copper metallochaperone essential for the synthesis and maturation of cytochrome c oxidase subunit II (MT-CO2/COX2) by facilitating the incorporation of copper into the Cu(A) site of MT-CO2/COX2. Could also act as a thiol-disulfide oxidoreductase to regulate the redox state of the cysteines in SCO1 during maturation of MT-CO2/COX2. In Danio rerio (Zebrafish), this protein is Protein SCO2 homolog, mitochondrial (sco2).